The sequence spans 487 residues: MPGPRVWGKYLWRSPHSKGCPGAMWWLLLWGVLQACPTRGSVLLAQELPQQLTSPGYPEPYGKGQESSTDIKAPEGFAVRLVFQDFDLEPSQDCAGDSVTISFVGSDPSQFCGQQGSPLGRPPGQREFVSSGRSLRLTFRTQPSSENKTAHLHKGFLALYQTVAVNYSQPISEASRGSEAINAPGDNPAKVQNHCQEPYYQAAAAGALTCATPGTWKDRQDGEEVLQCMPVCGRPVTPIAQNQTTLGSSRAKLGNFPWQAFTSIHGRGGGALLGDRWILTAAHTIYPKDSVSLRKNQSVNVFLGHTAIDEMLKLGNHPVHRVVVHPDYRQNESHNFSGDIALLELQHSIPLGPNVLPVCLPDNETLYRSGLLGYVSGFGMEMGWLTTELKYSRLPVAPREACNAWLQKRQRPEVFSDNMFCVGDETQRHSVCQGDSGSVYVVWDNHAHHWVATGIVSWGIGCGEGYDFYTKVLSYVDWIKGVMNGKN.

A signal peptide spans 1 to 35 (MPGPRVWGKYLWRSPHSKGCPGAMWWLLLWGVLQA). The CUB domain maps to 39 to 163 (RGSVLLAQEL…KGFLALYQTV (125 aa)). Cysteine 94 and cysteine 112 form a disulfide bridge. 2 N-linked (GlcNAc...) asparagine glycosylation sites follow: asparagine 147 and asparagine 166. In terms of domain architecture, Sushi spans 165-230 (VNYSQPISEA…DGEEVLQCMP (66 aa)). Cysteine 195 and cysteine 228 are oxidised to a cystine. Asparagine 242 is a glycosylation site (N-linked (GlcNAc...) (complex) asparagine). The region spanning 245–484 (TLGSSRAKLG…YVDWIKGVMN (240 aa)) is the Peptidase S1 domain. Histidine 283 (charge relay system) is an active-site residue. A glycan (N-linked (GlcNAc...) asparagine) is linked at asparagine 296. The active-site Charge relay system is aspartate 339. Asparagine 363 carries N-linked (GlcNAc...) asparagine glycosylation. 2 disulfides stabilise this stretch: cysteine 402/cysteine 421 and cysteine 432/cysteine 462. The active-site Charge relay system is serine 436.

The protein belongs to the peptidase S1 family. Highly expressed in placenta, liver, kidney, pancreas, moderately in lung, spleen, prostate, ovary, colon, and PBL, and weakly in heart, skeletal muscle, thymus, testis, and small intestine. Expressed in PC-3 (prostate adenocarcinoma) and SK-OV-3 (ovary adenocarcinoma) cells, but not in LoVo and HT-29 (colon adenocarcinoma), SMMC7721 (hepatocellular carcinoma), CaoV-3 (ovary adenocarcinoma), HeLa (cervix epithelioid carcinoma), MCF-7 (breast adenocarcinoma), U-251MG (glioma) or A-549 (lung carcinoma) cells. Widely expressed in myeloid leukemia cell lines, including K-562 (chronic myelogenous leukemia), THP-1 (myelomonocytic leukemia), HL-60 and NB4 (promyelocytic leukemia), and KG-1 (acute myelogenous leukemia) cells. Expressed mainly in the liver and in serum (at protein level).

The protein localises to the secreted. In terms of biological role, mediates the proteolytic cleavage of HP/haptoglobin in the endoplasmic reticulum. The sequence is that of Complement C1r subcomponent-like protein (C1RL) from Homo sapiens (Human).